The primary structure comprises 359 residues: DNA replication and repair protein RecF (359 aa).

ATP is bound at residue 30–37 (GPNGSGKT).

The protein belongs to the RecF family.

The protein localises to the cytoplasm. The RecF protein is involved in DNA metabolism; it is required for DNA replication and normal SOS inducibility. RecF binds preferentially to single-stranded, linear DNA. It also seems to bind ATP. The chain is DNA replication and repair protein RecF from Psychromonas ingrahamii (strain DSM 17664 / CCUG 51855 / 37).